We begin with the raw amino-acid sequence, 873 residues long: Zinc finger X-linked protein ZXDB (873 aa).

Disordered stretches follow at residues 1–23 (MEIP…GCPA), 48–120 (RGAQ…GGSR), 138–184 (VETV…LSAV), 240–259 (EPGV…GALI), and 301–330 (AEPA…GPAG). Gly residues-rich tracts occupy residues 14 to 23 (QGAGGGGCPA) and 85 to 120 (SGGG…GGSR). R89 bears the Omega-N-methylarginine mark. Residues 150-165 (VRREEAGAGPRPERRQ) show a composition bias toward basic and acidic residues. Residues 240-255 (EPGVAPFPQPQPPPQP) are compositionally biased toward pro residues. The segment covering 316 to 327 (APAAAAAQSPRG) has biased composition (low complexity). 10 C2H2-type zinc fingers span residues 340–364 (YLCP…LLTH), 373–397 (FKCP…LQSH), 403–427 (FGCP…MKGH), 433–455 (FKCE…QRSH), 462–486 (YQCA…NRAH), 493–517 (FACS…LRSH), 523–547 (FLCD…KRKH), 553–577 (FTCP…SITH), 583–607 (FVCP…SKKH), and 616–641 (SRCP…TKRH). The required for interaction with ZXDC stretch occupies residues 340–646 (YLCPEAQCGQ…MTKRHNLSQD (307 aa)). The interval 645–776 (QDLLAQLEAA…DMDDVSAGNV (132 aa)) is required for transcriptional activation.

This sequence belongs to the ZXD family. As to quaternary structure, self-associates. Interacts with ZXDC and CIITA.

It is found in the nucleus. Functionally, cooperates with CIITA to promote transcription of MHC class I and MHC class II genes. The polypeptide is Zinc finger X-linked protein ZXDB (Zxdb) (Mus musculus (Mouse)).